Here is a 53-residue protein sequence, read N- to C-terminus: uncharacterized protein (53 aa).

Positions 1–23 (MSILLKILFKLLLLILSITFVIT) are cleaved as a signal peptide.

This is an uncharacterized protein from Acheta domesticus (House cricket).